An 887-amino-acid polypeptide reads, in one-letter code: DNA gyrase subunit A (887 aa).

Residues 35–501 enclose the Topo IIA-type catalytic domain; it reads LPDVRDGLKP…GFEDLEDEDL (467 aa). Y123 serves as the catalytic O-(5'-phospho-DNA)-tyrosine intermediate. The GyrA-box signature appears at 528 to 534; sequence QNRGGRG. The segment at 811–865 is disordered; that stretch reads KEDAEDETNEDEQSTSTVSEDGTEQQREAVVNDETPGNAIHTEVIDSEENDEDGR. A compositionally biased stretch (acidic residues) spans 813–823; it reads DAEDETNEDEQ.

It belongs to the type II topoisomerase GyrA/ParC subunit family. Heterotetramer, composed of two GyrA and two GyrB chains. In the heterotetramer, GyrA contains the active site tyrosine that forms a transient covalent intermediate with DNA, while GyrB binds cofactors and catalyzes ATP hydrolysis.

It is found in the cytoplasm. The enzyme catalyses ATP-dependent breakage, passage and rejoining of double-stranded DNA.. Its function is as follows. A type II topoisomerase that negatively supercoils closed circular double-stranded (ds) DNA in an ATP-dependent manner to modulate DNA topology and maintain chromosomes in an underwound state. Negative supercoiling favors strand separation, and DNA replication, transcription, recombination and repair, all of which involve strand separation. Also able to catalyze the interconversion of other topological isomers of dsDNA rings, including catenanes and knotted rings. Type II topoisomerases break and join 2 DNA strands simultaneously in an ATP-dependent manner. This is DNA gyrase subunit A from Staphylococcus aureus (strain MSSA476).